Here is a 900-residue protein sequence, read N- to C-terminus: Isoleucine--tRNA ligase (900 aa).

The 'HIGH' region signature appears at 58-68; it reads PYANGNIHIGH. E552 lines the L-isoleucyl-5'-AMP pocket. The 'KMSKS' region motif lies at 593–597; the sequence is KMSKS. K596 lines the ATP pocket.

Belongs to the class-I aminoacyl-tRNA synthetase family. IleS type 1 subfamily. Monomer.

It localises to the cytoplasm. The catalysed reaction is tRNA(Ile) + L-isoleucine + ATP = L-isoleucyl-tRNA(Ile) + AMP + diphosphate. In terms of biological role, catalyzes the attachment of isoleucine to tRNA(Ile). As IleRS can inadvertently accommodate and process structurally similar amino acids such as valine, to avoid such errors it has two additional distinct tRNA(Ile)-dependent editing activities. One activity is designated as 'pretransfer' editing and involves the hydrolysis of activated Val-AMP. The other activity is designated 'posttransfer' editing and involves deacylation of mischarged Val-tRNA(Ile). This Ureaplasma parvum serovar 3 (strain ATCC 700970) protein is Isoleucine--tRNA ligase.